The chain runs to 860 residues: Linoleate 9S-lipoxygenase A (860 aa).

Positions Asn-29–Ala-159 constitute a PLAT domain. One can recognise a Lipoxygenase domain in the interval Pro-162 to Ile-860. The disordered stretch occupies residues Pro-209–Glu-246. Fe cation is bound by residues His-521, His-526, His-712, Asn-716, and Ile-860.

The protein belongs to the lipoxygenase family. As to quaternary structure, monomer. Fe cation is required as a cofactor. Expressed in germinating seeds as well as in ripening fruit.

It localises to the cytoplasm. The catalysed reaction is (9Z,12Z)-octadecadienoate + O2 = (9S)-hydroperoxy-(10E,12Z)-octadecadienoate. It participates in lipid metabolism; oxylipin biosynthesis. Functionally, plant lipoxygenase may be involved in a number of diverse aspects of plant physiology including growth and development, pest resistance, and senescence or responses to wounding. It catalyzes the hydroperoxidation of lipids containing a cis,cis-1,4-pentadiene structure. The polypeptide is Linoleate 9S-lipoxygenase A (LOX1.1) (Solanum lycopersicum (Tomato)).